We begin with the raw amino-acid sequence, 351 residues long: Transcription factor Atoh1 (351 aa).

2 disordered regions span residues 16-39 (LGDH…PATL) and 89-116 (EAAA…SKSP). A compositionally biased stretch (pro residues) spans 26-36 (HHVPPLTPQPP). The region spanning 156–208 (QRRLAANARERRRMHGLNHAFDQLRNVIPSFNNDKKLSKYETLQMAQIYINAL) is the bHLH domain. Disordered regions lie at residues 244–278 (GAGA…GPAS) and 308–351 (LSPS…DEAS). Low complexity predominate over residues 247 to 256 (ASAVAGAQPA). Pro residues predominate over residues 258 to 268 (GGGPRPTPPGP). The span at 332 to 351 (HRSDGEFSPHSHYSDSDEAS) shows a compositional bias: basic and acidic residues.

In terms of assembly, efficient DNA binding requires dimerization with another bHLH protein. As to expression, developing nervous system, and in adult epithelial cells of the gastrointestinal tract.

It is found in the nucleus. Its function is as follows. Transcriptional regulator. Activates E box-dependent transcription in collaboration with TCF3/E47, but the activity is completely antagonized by the negative regulator of neurogenesis HES1. Plays a role in the differentiation of subsets of neural cells by activating E box-dependent transcription. This is Transcription factor Atoh1 from Mus musculus (Mouse).